We begin with the raw amino-acid sequence, 445 residues long: MNAYKKQKIGIFGLGKTGISVYEELKNKYDLIVYDDLEANRDIFKELFGNNLITVLSDSRWQDLDKIVLSPGVPLTHEVVRIAHHFNIPIISDIDLFFEKSKNLKFIAITGTNGKSTTTALISHILNSNGLDYPVAGNIGVPALQAKASNEGYVLELSSFQLDLVKSFTVKVAVLLNITPDHLDRYQDMNDYIAAKAKIFDRMDKDSYAVINIDNDYCRKIFVLLQKDQSIKLIPFSVTKILKNGISIVDDKIHDNDLTYKLPLNKNLQGLHNCENIAASYAVAKIIGLESKKILESISSFQSLHHRMQYIGSINNISFYNDSKATNAISALQSIKALDNIYWLAGGIPKEGGIEGIKPYFNKIKKAYFYGQAKAMFANTAKNIIDFVICDNLEYAFNIAYKDAVSDTTEVKNILLAPSCSSYDQFKNFEERGELFIKLSKRHWQ.

Position 111-117 (111-117) interacts with ATP; sequence GTNGKST.

The protein belongs to the MurCDEF family.

It is found in the cytoplasm. The catalysed reaction is UDP-N-acetyl-alpha-D-muramoyl-L-alanine + D-glutamate + ATP = UDP-N-acetyl-alpha-D-muramoyl-L-alanyl-D-glutamate + ADP + phosphate + H(+). Its pathway is cell wall biogenesis; peptidoglycan biosynthesis. Cell wall formation. Catalyzes the addition of glutamate to the nucleotide precursor UDP-N-acetylmuramoyl-L-alanine (UMA). This chain is UDP-N-acetylmuramoylalanine--D-glutamate ligase (murD), found in Rickettsia prowazekii (strain Madrid E).